Consider the following 546-residue polypeptide: 5'-nucleotidase domain-containing protein 3 (546 aa).

Residue Asp100 is the Nucleophile of the active site. Mg(2+)-binding residues include Asp100 and Asp102. Catalysis depends on Asp102, which acts as the Proton donor. 249-257 contacts substrate; that stretch reads KDSIRDVHI. Position 387 (Asp387) interacts with Mg(2+).

Belongs to the 5'(3')-deoxyribonucleotidase family. The cofactor is Mg(2+).

The chain is 5'-nucleotidase domain-containing protein 3 (Nt5dc3) from Mus musculus (Mouse).